The sequence spans 433 residues: MRVFKGEVTALPPDKSISHRAALIGALSEGTTEIMNFSGGFDNQSTLGVLKDAGITLRQELLEGADGRTVRQVIIESKGLWSFQPPSAPLMCNNSGSTMRMFAGILAAQPFASELIGDSSLMKRPMKRVADPLRQMGADLQLSPSGTAPICIKGSKELKPINYRLPVPSAQVKSLVAFAALHADGESRIIESVRSRDHTEVMLGLDSFEQDGERVIVVPGRKTVAAKPFYIPADPSAACFIVALGLLARGSEIIIRDVCLNPTRAAFLNILTDAGACLTIENQRVIGGETIGDILVENHAALEPLLITDPQLVAFIIDEIPMLAVLSAFASGRFELHNAAELRTKESDRIDALVVNLQRLGFDCEQYPDGFVVKGRRITPSGTVVIDSFDDHRIAMSFAIAGKATGCPIDLSDIDVVGVSFPNFFDLLDSLQV.

3-phosphoshikimate contacts are provided by Lys-15, Ser-16, and Arg-20. Lys-15 is a phosphoenolpyruvate binding site. Phosphoenolpyruvate is bound by residues Gly-96 and Arg-124. Residues Ser-169, Gln-171, Ser-195, Asp-318, and Lys-345 each contribute to the 3-phosphoshikimate site. Gln-171 provides a ligand contact to phosphoenolpyruvate. The Proton acceptor role is filled by Asp-318. 2 residues coordinate phosphoenolpyruvate: Arg-349 and Arg-393.

Belongs to the EPSP synthase family. Monomer.

It localises to the cytoplasm. The enzyme catalyses 3-phosphoshikimate + phosphoenolpyruvate = 5-O-(1-carboxyvinyl)-3-phosphoshikimate + phosphate. Its pathway is metabolic intermediate biosynthesis; chorismate biosynthesis; chorismate from D-erythrose 4-phosphate and phosphoenolpyruvate: step 6/7. Its function is as follows. Catalyzes the transfer of the enolpyruvyl moiety of phosphoenolpyruvate (PEP) to the 5-hydroxyl of shikimate-3-phosphate (S3P) to produce enolpyruvyl shikimate-3-phosphate and inorganic phosphate. This chain is 3-phosphoshikimate 1-carboxyvinyltransferase, found in Pelodictyon phaeoclathratiforme (strain DSM 5477 / BU-1).